The primary structure comprises 382 residues: Kelch domain-containing protein 3 (382 aa).

Kelch repeat units follow at residues 25-77, 88-138, 139-189, 191-249, and 251-301; these read RVYS…PYMR, TVFL…VLGK, IMYI…TMLG, HMYV…GYNG, and LYIF…IVGD.

In terms of assembly, component of a CRL2(KLHDC3) complex, also named ECS(KLHDC3) complex, composed of CUL2, Elongin BC (ELOB and ELOC), RBX1 and substrate-specific adapter KLHDC3. May form oligomers as a KLHDC3-ELOB-ELOC complex; this interaction is likely autoinhibitory for the E3 ligase complex. In terms of tissue distribution, expressed specifically in testis, particularly in pachytene spermatocytes.

It localises to the cytoplasm. It participates in protein modification; protein ubiquitination. Its function is as follows. Substrate-recognition component of a Cul2-RING (CRL2) E3 ubiquitin-protein ligase complex of the DesCEND (destruction via C-end degrons) pathway, which recognizes a C-degron located at the extreme C terminus of target proteins, leading to their ubiquitination and degradation. The C-degron recognized by the DesCEND pathway is usually a motif of less than ten residues and can be present in full-length proteins, truncated proteins or proteolytically cleaved forms. The CRL2(KLHDC3) complex specifically recognizes proteins with a glycine (Gly) at the C-terminus, leading to their ubiquitination and degradation: recognizes the C-terminal -Arg-(Xaa)n-Arg-Gly, -Arg-(Xaa)n-Lys-Gly, and -Arg-(Xaa)n-Gln-Gly degrons. The CRL2(KLHDC3) complex mediates ubiquitination and degradation of truncated SELENOV and SEPHS2 selenoproteins produced by failed UGA/Sec decoding, which end with a glycine. May be involved in meiotic recombination process. This Mus musculus (Mouse) protein is Kelch domain-containing protein 3.